We begin with the raw amino-acid sequence, 264 residues long: Phosphate import ATP-binding protein PstB 1 (264 aa).

Residues 20–259 enclose the ABC transporter domain; that stretch reads LETRDLNIFY…PKIKLTEDYI (240 aa). An ATP-binding site is contributed by 52–59; it reads GASGSGKS.

The protein belongs to the ABC transporter superfamily. Phosphate importer (TC 3.A.1.7) family. In terms of assembly, the complex is composed of two ATP-binding proteins (PstB), two transmembrane proteins (PstC and PstA) and a solute-binding protein (PstS).

The protein localises to the cell membrane. It carries out the reaction phosphate(out) + ATP + H2O = ADP + 2 phosphate(in) + H(+). In terms of biological role, part of the ABC transporter complex PstSACB involved in phosphate import. Responsible for energy coupling to the transport system. The protein is Phosphate import ATP-binding protein PstB 1 of Ligilactobacillus salivarius (strain UCC118) (Lactobacillus salivarius).